The sequence spans 159 residues: uncharacterized protein (159 aa).

Transmembrane regions (helical) follow at residues threonine 5–valine 27, alanine 34–valine 51, serine 61–leucine 83, and phenylalanine 103–valine 125.

It is found in the cell membrane. This is an uncharacterized protein from Treponema pallidum (strain Nichols).